We begin with the raw amino-acid sequence, 432 residues long: Adenylosuccinate synthetase (432 aa).

GTP-binding positions include 13–19 (GDEGKGK) and 41–43 (GHT). Residue Asp14 is the Proton acceptor of the active site. The Mg(2+) site is built by Asp14 and Gly41. IMP is bound by residues 14–17 (DEGK), 39–42 (NAGH), Thr130, Arg144, Gln225, Thr240, and Arg304. His42 serves as the catalytic Proton donor. 300–306 (ATTGRRR) serves as a coordination point for substrate. GTP is bound by residues Arg306, 332–334 (KLD), and 415–417 (STG).

It belongs to the adenylosuccinate synthetase family. As to quaternary structure, homodimer. It depends on Mg(2+) as a cofactor.

It is found in the cytoplasm. The catalysed reaction is IMP + L-aspartate + GTP = N(6)-(1,2-dicarboxyethyl)-AMP + GDP + phosphate + 2 H(+). The protein operates within purine metabolism; AMP biosynthesis via de novo pathway; AMP from IMP: step 1/2. In terms of biological role, plays an important role in the de novo pathway of purine nucleotide biosynthesis. Catalyzes the first committed step in the biosynthesis of AMP from IMP. This Shigella sonnei (strain Ss046) protein is Adenylosuccinate synthetase.